The sequence spans 317 residues: Methionyl-tRNA formyltransferase (317 aa).

111 to 114 is a (6S)-5,6,7,8-tetrahydrofolate binding site; sequence SLLP.

Belongs to the Fmt family.

The catalysed reaction is L-methionyl-tRNA(fMet) + (6R)-10-formyltetrahydrofolate = N-formyl-L-methionyl-tRNA(fMet) + (6S)-5,6,7,8-tetrahydrofolate + H(+). Attaches a formyl group to the free amino group of methionyl-tRNA(fMet). The formyl group appears to play a dual role in the initiator identity of N-formylmethionyl-tRNA by promoting its recognition by IF2 and preventing the misappropriation of this tRNA by the elongation apparatus. This chain is Methionyl-tRNA formyltransferase, found in Chlorobium phaeobacteroides (strain BS1).